The sequence spans 331 residues: MSTKEKLISHVMKEEPVGSRNKVTVVGVGMVGMASAISILLKDLCDELAMVDVMEDKLKGEVMDLQHGSLFLKTKIVGDKDYSVTANSKVVVVTAGARQQEGESRLNLVQRNVNIFKFIIPNIVKYSPNCILMVVSNPVDILTYVAWKLSGFPRHRVIGSGTNLDSARFRHLIGEKLHLHPSSCHAWIVGEHGDSSVPVWSGVNVAGVSLQGLNPQMGTEGDGENWKAIHKEVVDGAYEVIKLKGYTSWAIGMSVADLVESIIKNMHKVHPVSTLVQGMHGVKDEVFLSVPCVLGNSGLTDVIHMTLKAEEEKQLQKSAETLWGVQKELTL.

Residues 29 to 57 (GMVG…MEDK) and Arg98 contribute to the NAD(+) site. Substrate-binding residues include Arg105, Asn137, and Arg168. An NAD(+)-binding site is contributed by Asn137. Residue His192 is the Proton acceptor of the active site. Position 247 (Thr247) interacts with substrate.

Belongs to the LDH/MDH superfamily. LDH family. Homotetramer.

Its subcellular location is the cytoplasm. It carries out the reaction (S)-lactate + NAD(+) = pyruvate + NADH + H(+). It participates in fermentation; pyruvate fermentation to lactate; (S)-lactate from pyruvate: step 1/1. In terms of biological role, interconverts simultaneously and stereospecifically pyruvate and lactate with concomitant interconversion of NADH and NAD(+). The polypeptide is L-lactate dehydrogenase A chain (ldha) (Chaenocephalus aceratus (Blackfin icefish)).